The primary structure comprises 821 residues: Condensin-2 complex subunit kle-2 (821 aa).

The disordered stretch occupies residues 389–426 (VMQNDEPNTSRRPDENYAPMDFDDDFGGGGDDDDDDYI). The span at 409–424 (DFDDDFGGGGDDDDDD) shows a compositional bias: acidic residues. Residues 529 to 561 (TAILAEKKRRIKEKTAKIREARIQNMQRKRTAR) adopt a coiled-coil conformation.

It belongs to the CND2 H2 (condensin-2 subunit 2) family. In terms of assembly, component of the condensin II complex, which contains the mix-1/SMC2 and smc-4/SMC4 heterodimer, and three non SMC subunits, capg-2, kle-2 and hcp-6 that probably regulate the complex. Within the complex, interacts with mix-1, smc-4, capg-2 and hcp-6.

It localises to the nucleus. The protein resides in the chromosome. It is found in the centromere. In terms of biological role, regulatory subunit of the condensin II complex, a complex that seems to play a role in prophase chromosome condensation and in chromosome segregation in mitosis and in meiosis. This is Condensin-2 complex subunit kle-2 (kle-2) from Caenorhabditis elegans.